Reading from the N-terminus, the 216-residue chain is 3-keto-L-gulonate-6-phosphate decarboxylase UlaD (216 aa).

Substrate is bound at residue Asp-11. Glu-33 and Asp-62 together coordinate Mg(2+). Arg-192 serves as a coordination point for substrate.

The protein belongs to the HPS/KGPDC family. KGPDC subfamily. In terms of assembly, homodimer. Mg(2+) serves as cofactor.

It catalyses the reaction 3-dehydro-L-gulonate 6-phosphate + H(+) = L-xylulose 5-phosphate + CO2. Its pathway is cofactor degradation; L-ascorbate degradation; D-xylulose 5-phosphate from L-ascorbate: step 2/4. In terms of biological role, catalyzes the decarboxylation of 3-keto-L-gulonate-6-P into L-xylulose-5-P. Is involved in the anaerobic L-ascorbate utilization. This chain is 3-keto-L-gulonate-6-phosphate decarboxylase UlaD, found in Escherichia coli O127:H6 (strain E2348/69 / EPEC).